Consider the following 294-residue polypeptide: Nucleotide-binding protein lp_0779 (294 aa).

An ATP-binding site is contributed by 12 to 19 (GMSGAGKT). Position 62 to 65 (62 to 65 (DLRS)) interacts with GTP.

It belongs to the RapZ-like family.

Displays ATPase and GTPase activities. In Lactiplantibacillus plantarum (strain ATCC BAA-793 / NCIMB 8826 / WCFS1) (Lactobacillus plantarum), this protein is Nucleotide-binding protein lp_0779.